The sequence spans 424 residues: uncharacterized protein (424 aa).

Lys-259 is modified (N6-(pyridoxal phosphate)lysine).

Belongs to the class-III pyridoxal-phosphate-dependent aminotransferase family. It depends on pyridoxal 5'-phosphate as a cofactor.

This is an uncharacterized protein from Archaeoglobus fulgidus (strain ATCC 49558 / DSM 4304 / JCM 9628 / NBRC 100126 / VC-16).